A 586-amino-acid chain; its full sequence is MGGAARDRGRKDAALPGAGLPPQQRRLGDGVYDTFMMIDETKGPPYSDTFSNPSEAPVSRRLNITTEPLTRGHTQHFVNGSEMKVEQLFQEFGNRRSNTLQSDGISNSEKSSPASQGKSSESLSAVKCNLSSRPSKVLPLTPEQALKQYKHHLTAYEKLEIVSYPEIYFVGPNAKKRQGVIGGPNNGGYDDADGAYIHVPRDHLAYRYEVLKIIGKGSFGQVARVYDHKLRQYVALKMVRNEKRFHRQAAEEIRILEHLKKQDKTGSMNVIHMLESFTFRNHVCMAFELLSIDLYELIKKNKFQGFSVQLVRKFAQSILQSLDALHKNKIIHCDLKPENILLKHHGRSATKVIDFGSSCFEYQKLYTYIQSRFYRAPEIILGCRYSTPIDIWSFGCILAELLTGQPLFPGEDEGDQLACMIELLGMPPQKLLEQSKRAKYFINSKGLPRYCSVSTQTDGRVVLLGGRSRRGKKRGPPGSKDWATALKGCGDYLFIEFLKRCLQWDPSARLTPAQALRHPWISKSTPKPLTMDKVPGKRVVNPTNAFQGLGSKLPPVVGIASKLKANLMSETSGSIPLCSVLPKLIS.

The span at 1-13 (MGGAARDRGRKDA) shows a compositional bias: basic and acidic residues. A disordered region spans residues 1–187 (MGGAARDRGR…QGVIGGPNNG (187 aa)). In terms of domain architecture, Protein kinase spans 208–521 (YEVLKIIGKG…PAQALRHPWI (314 aa)). ATP-binding positions include 214–222 (IGKGSFGQV), Lys-237, and 287–290 (FELL). Asp-334 (proton acceptor) is an active-site residue. Tyr-368 carries the post-translational modification Phosphotyrosine. Positions 467–480 (RSRRGKKRGPPGSK) match the Nuclear localization signal motif.

It belongs to the protein kinase superfamily. CMGC Ser/Thr protein kinase family. MNB/DYRK subfamily. As to quaternary structure, interacts with SIRT1. It depends on Mg(2+) as a cofactor. Ubiquitinated at anaphase by the anaphase-promoting complex (APC/C), leading to its degradation by the proteasome. In terms of processing, protein kinase activity is activated following autophosphorylation at Tyr-368.

The protein localises to the nucleus. Its subcellular location is the cytoplasm. The protein resides in the nucleus speckle. It localises to the cytoplasmic granule. It is found in the cytoskeleton. The protein localises to the microtubule organizing center. Its subcellular location is the centrosome. The enzyme catalyses L-seryl-[protein] + ATP = O-phospho-L-seryl-[protein] + ADP + H(+). It catalyses the reaction L-threonyl-[protein] + ATP = O-phospho-L-threonyl-[protein] + ADP + H(+). It carries out the reaction L-tyrosyl-[protein] + ATP = O-phospho-L-tyrosyl-[protein] + ADP + H(+). Protein kinase activity is activated following autophosphorylation at Tyr-368. Functionally, dual-specificity protein kinase that promotes disassembly of several types of membraneless organelles during mitosis, such as stress granules, nuclear speckles and pericentriolar material. Dual-specificity tyrosine-regulated kinases (DYRKs) autophosphorylate a critical tyrosine residue in their activation loop and phosphorylate their substrate on serine and threonine residues. Acts as a central dissolvase of membraneless organelles during the G2-to-M transition, after the nuclear-envelope breakdown: acts by mediating phosphorylation of multiple serine and threonine residues in unstructured domains of proteins, such as SRRM1 and PCM1. Does not mediate disassembly of all membraneless organelles: disassembly of P-body and nucleolus is not regulated by DYRK3. Dissolution of membraneless organelles at the onset of mitosis is also required to release mitotic regulators, such as ZNF207, from liquid-unmixed organelles where they are sequestered and keep them dissolved during mitosis. Regulates mTORC1 by mediating the dissolution of stress granules: during stressful conditions, DYRK3 partitions from the cytosol to the stress granule, together with mTORC1 components, which prevents mTORC1 signaling. When stress signals are gone, the kinase activity of DYRK3 is required for the dissolution of stress granule and mTORC1 relocation to the cytosol: acts by mediating the phosphorylation of the mTORC1 inhibitor AKT1S1, allowing full reactivation of mTORC1 signaling. Also acts as a negative regulator of EPO-dependent erythropoiesis: may place an upper limit on red cell production during stress erythropoiesis. Inhibits cell death due to cytokine withdrawal in hematopoietic progenitor cells. Promotes cell survival upon genotoxic stress through phosphorylation of SIRT1: this in turn inhibits p53/TP53 activity and apoptosis. The chain is Dual specificity tyrosine-phosphorylation-regulated kinase 3 from Mus musculus (Mouse).